We begin with the raw amino-acid sequence, 292 residues long: Ribosomal protein L11 methyltransferase (292 aa).

The S-adenosyl-L-methionine site is built by threonine 145, glycine 166, aspartate 188, and asparagine 229.

Belongs to the methyltransferase superfamily. PrmA family.

It localises to the cytoplasm. It catalyses the reaction L-lysyl-[protein] + 3 S-adenosyl-L-methionine = N(6),N(6),N(6)-trimethyl-L-lysyl-[protein] + 3 S-adenosyl-L-homocysteine + 3 H(+). Methylates ribosomal protein L11. The polypeptide is Ribosomal protein L11 methyltransferase (Pseudoalteromonas atlantica (strain T6c / ATCC BAA-1087)).